The following is a 159-amino-acid chain: uncharacterized protein (159 aa).

A helical transmembrane segment spans residues 4-24 (QIALILSLIILIFFIYKFAMF).

Its subcellular location is the membrane. This is an uncharacterized protein from Acheta domesticus (House cricket).